Reading from the N-terminus, the 450-residue chain is C4-dicarboxylate transport protein (450 aa).

The next 8 helical transmembrane spans lie at 25–45 (VVFAIIIGVLLGHFQPEYGAA), 56–76 (LIKMIIAPVIFLTIVTGIASM), 90–110 (MAYFLTFSTLALVVGLVVANV), 162–182 (ILQVLLVAVLFGVSLAMVGDA), 200–220 (LVNIVMKAAPIGAFGAMAFTI), 234–254 (LVLTFYITSAVFVLVVLGAVA), 319–339 (IYMTLAALFIAQATDTHLTLG), and 367–387 (AATLAVVPEVPVAGMALILGV).

This sequence belongs to the dicarboxylate/amino acid:cation symporter (DAACS) (TC 2.A.23) family.

The protein resides in the cell inner membrane. Responsible for the transport of dicarboxylates such as succinate, fumarate, and malate from the periplasm across the membrane. This Acidovorax ebreus (strain TPSY) (Diaphorobacter sp. (strain TPSY)) protein is C4-dicarboxylate transport protein.